A 222-amino-acid polypeptide reads, in one-letter code: Putative thymidylate synthase (222 aa).

The active site involves cysteine 146.

It belongs to the thymidylate synthase family. Archaeal-type ThyA subfamily. Monomer.

The protein localises to the cytoplasm. It participates in pyrimidine metabolism; dTTP biosynthesis. In terms of biological role, may catalyze the biosynthesis of dTMP using an unknown cosubstrate. This chain is Putative thymidylate synthase, found in Methanothermobacter thermautotrophicus (strain ATCC 29096 / DSM 1053 / JCM 10044 / NBRC 100330 / Delta H) (Methanobacterium thermoautotrophicum).